A 242-amino-acid polypeptide reads, in one-letter code: Small ribosomal subunit protein uS3 (242 aa).

In terms of domain architecture, KH type-2 spans 39-110 (IRKFIHKKYG…QVRINVVEVE (72 aa)). Positions 221–242 (GASPRRRASRRPQQFEDRSNEG) are disordered. Positions 233-242 (QQFEDRSNEG) are enriched in basic and acidic residues.

The protein belongs to the universal ribosomal protein uS3 family. Part of the 30S ribosomal subunit. Forms a tight complex with proteins S10 and S14.

Binds the lower part of the 30S subunit head. Binds mRNA in the 70S ribosome, positioning it for translation. This is Small ribosomal subunit protein uS3 from Parasynechococcus marenigrum (strain WH8102).